Here is a 738-residue protein sequence, read N- to C-terminus: Platelet endothelial cell adhesion molecule (738 aa).

The first 27 residues, M1–G27, serve as a signal peptide directing secretion. Residues Q28 to K601 are Extracellular-facing. Ig-like C2-type domains follow at residues N35 to A121, G145 to F233, and P236 to S315. 3 N-linked (GlcNAc...) asparagine glycosylation sites follow: N52, N84, and N151. A disulfide bridge links C57 with C109. 2 disulfide bridges follow: C152–C206 and C256–C304. N-linked (GlcNAc...) asparagine glycosylation is found at N301, N320, N344, N356, N453, and N551. 3 Ig-like C2-type domains span residues P328 to Q401, G424 to R493, and P499 to T591. 3 disulfides stabilise this stretch: C347-C386, C431-C476, and C523-C572. Residues G602–A620 traverse the membrane as a helical segment. The Cytoplasmic segment spans residues K621 to T738. A lipid anchor (S-palmitoyl cysteine) is attached at C622. Positions E658–E715 are disordered. Polar residues predominate over residues S686 to A698. 2 consecutive short sequence motifs (ITIM motif) follow at residues V688–V693 and T711–V716. Phosphotyrosine; by FER occurs at positions 690 and 713. A compositionally biased stretch (basic and acidic residues) spans E699–E715. Residues T709 to S729 are membrane-bound segment which detaches upon phosphorylation. The interval P721–T738 is may play a role in cytoprotective signaling. S729 and S734 each carry phosphoserine.

As to quaternary structure, trans-homodimer (via Ig-like C2-type 1 and Ig-like C2-type 2 domains); trans-homodimerization is required for cell-cell interaction. Forms a complex with BDKRB2 and GNAQ. Interacts with BDKRB2 and GNAQ. Interacts with PTPN11; Tyr-713 is critical for PTPN11 recruitment. Interacts with FER. Interacts (via Ig-like C2-type domain 6) with CD177; the interaction is Ca(2+)-dependent; the interaction is direct. Post-translationally, phosphorylated on Ser and Tyr residues after cellular activation by src kinases. Upon activation, phosphorylated on Ser-729 which probably initiates the dissociation of the membrane-interaction segment (residues 709-729) from the cell membrane allowing the sequential phosphorylation of Tyr-713 and Tyr-690. Constitutively phosphorylated on Ser-734 in resting platelets. Phosphorylated on tyrosine residues by FER and FES in response to FCER1 activation. In endothelial cells Fyn mediates mechanical-force (stretch or pull) induced tyrosine phosphorylation. In terms of processing, palmitoylation by ZDHHC21 is necessary for cell surface expression in endothelial cells and enrichment in membrane rafts. In terms of tissue distribution, expressed on platelets and leukocytes and is primarily concentrated at the borders between endothelial cells. Expressed in human umbilical vein endothelial cells (HUVECs) (at protein level). Expressed on neutrophils (at protein level). Isoform Long predominates in all tissues examined. Isoform Delta12 is detected only in trachea. Isoform Delta14-15 is only detected in lung. Isoform Delta14 is detected in all tissues examined with the strongest expression in heart. Isoform Delta15 is expressed in brain, testis, ovary, cell surface of platelets, human umbilical vein endothelial cells (HUVECs), Jurkat T-cell leukemia, human erythroleukemia (HEL) and U-937 histiocytic lymphoma cell lines (at protein level).

The protein localises to the cell membrane. The protein resides in the membrane raft. It localises to the cell junction. In terms of biological role, cell adhesion molecule which is required for leukocyte transendothelial migration (TEM) under most inflammatory conditions. Tyr-690 plays a critical role in TEM and is required for efficient trafficking of PECAM1 to and from the lateral border recycling compartment (LBRC) and is also essential for the LBRC membrane to be targeted around migrating leukocytes. Trans-homophilic interaction may play a role in endothelial cell-cell adhesion via cell junctions. Heterophilic interaction with CD177 plays a role in transendothelial migration of neutrophils. Homophilic ligation of PECAM1 prevents macrophage-mediated phagocytosis of neighboring viable leukocytes by transmitting a detachment signal. Promotes macrophage-mediated phagocytosis of apoptotic leukocytes by tethering them to the phagocytic cells; PECAM1-mediated detachment signal appears to be disabled in apoptotic leukocytes. Modulates bradykinin receptor BDKRB2 activation. Regulates bradykinin- and hyperosmotic shock-induced ERK1/2 activation in endothelial cells. Induces susceptibility to atherosclerosis. Does not protect against apoptosis. In Homo sapiens (Human), this protein is Platelet endothelial cell adhesion molecule (PECAM1).